The sequence spans 418 residues: Serine hydroxymethyltransferase (418 aa).

Residues L121 and 125–127 contribute to the (6S)-5,6,7,8-tetrahydrofolate site; that span reads GHL. At K230 the chain carries N6-(pyridoxal phosphate)lysine. (6S)-5,6,7,8-tetrahydrofolate contacts are provided by residues E246 and 355–357; that span reads SPF.

It belongs to the SHMT family. As to quaternary structure, homodimer. Requires pyridoxal 5'-phosphate as cofactor.

The protein localises to the cytoplasm. The enzyme catalyses (6R)-5,10-methylene-5,6,7,8-tetrahydrofolate + glycine + H2O = (6S)-5,6,7,8-tetrahydrofolate + L-serine. It participates in one-carbon metabolism; tetrahydrofolate interconversion. Its pathway is amino-acid biosynthesis; glycine biosynthesis; glycine from L-serine: step 1/1. Its function is as follows. Catalyzes the reversible interconversion of serine and glycine with tetrahydrofolate (THF) serving as the one-carbon carrier. This reaction serves as the major source of one-carbon groups required for the biosynthesis of purines, thymidylate, methionine, and other important biomolecules. Also exhibits THF-independent aldolase activity toward beta-hydroxyamino acids, producing glycine and aldehydes, via a retro-aldol mechanism. This is Serine hydroxymethyltransferase from Streptococcus pneumoniae serotype 19F (strain G54).